We begin with the raw amino-acid sequence, 172 residues long: Glutamyl-tRNA(Gln) amidotransferase subunit C-3, mitochondrial (172 aa).

Residues 49–71 form a disordered region; sequence KHPSKVPQRPNKSTIDGQSTPTR. Positions 58–71 are enriched in polar residues; it reads PNKSTIDGQSTPTR.

Belongs to the GatC family. In terms of assembly, subunit of the heterotrimeric GatCAB amidotransferase (AdT) complex, composed of A, B and C subunits.

It localises to the mitochondrion. The enzyme catalyses L-glutamyl-tRNA(Gln) + L-glutamine + ATP + H2O = L-glutaminyl-tRNA(Gln) + L-glutamate + ADP + phosphate + H(+). Its function is as follows. Allows the formation of correctly charged Gln-tRNA(Gln) through the transamidation of misacylated Glu-tRNA(Gln) in the mitochondria. The reaction takes place in the presence of glutamine and ATP through an activated gamma-phospho-Glu-tRNA(Gln). The chain is Glutamyl-tRNA(Gln) amidotransferase subunit C-3, mitochondrial from Culex quinquefasciatus (Southern house mosquito).